The sequence spans 299 residues: Fluorinase (299 aa).

Residues Asp-15, Asp-20–Ser-22, Tyr-76, Ser-157, Asp-210, Asn-215, Ser-269–Arg-270, and Arg-277–Ala-279 each bind S-adenosyl-L-methionine.

Belongs to the SAM hydrolase / SAM-dependent halogenase family.

The enzyme catalyses fluoride + S-adenosyl-L-methionine = 5'-deoxy-5'-fluoroadenosine + L-methionine. Activity is not severely affected by most metal ions (Mg(2+), Mn(2+), Co(2+) and Fe(2+)), but both Cu(2+) and Zn(2+) are strong inhibitors. Catalyzes the formation of a C-F bond by combining S-adenosyl-L-methionine (SAM) and fluoride to generate 5'-fluoro-5'-deoxyadenosine (5'-FDA) and L-methionine. In Actinopolyspora mzabensis, this protein is Fluorinase.